A 260-amino-acid polypeptide reads, in one-letter code: Proteasome subunit alpha 1 (260 aa).

The interval 237–260 (AEADLLDTGEDADDEAEDEDATEE) is disordered. Acidic residues predominate over residues 240 to 260 (DLLDTGEDADDEAEDEDATEE).

This sequence belongs to the peptidase T1A family. The 20S proteasome core is composed of 14 alpha and 14 beta subunits that assemble into four stacked heptameric rings, resulting in a barrel-shaped structure. The two inner rings, each composed of seven catalytic beta subunits, are sandwiched by two outer rings, each composed of seven alpha subunits. The catalytic chamber with the active sites is on the inside of the barrel. Has a gated structure, the ends of the cylinder being occluded by the N-termini of the alpha-subunits. Is capped at one or both ends by the proteasome regulatory ATPase, PAN.

Its subcellular location is the cytoplasm. With respect to regulation, the formation of the proteasomal ATPase PAN-20S proteasome complex, via the docking of the C-termini of PAN into the intersubunit pockets in the alpha-rings, triggers opening of the gate for substrate entry. Interconversion between the open-gate and close-gate conformations leads to a dynamic regulation of the 20S proteasome proteolysis activity. Component of the proteasome core, a large protease complex with broad specificity involved in protein degradation. This chain is Proteasome subunit alpha 1, found in Haloarcula marismortui (strain ATCC 43049 / DSM 3752 / JCM 8966 / VKM B-1809) (Halobacterium marismortui).